We begin with the raw amino-acid sequence, 452 residues long: F-box only protein 47 (452 aa).

Residues 41–91 form the F-box domain; that stretch reads FGNFKALPLEIFQIILKYLSVKDISMLSMVSKTVSQHIINYISTSSGSKRL.

Part of a SCF (SKP1-cullin-F-box) protein ligase complex. As to expression, widely expressed, with highest levels in kidney, liver and pancreas. Down-regulated in tumors.

Functionally, probably recognizes and binds to some phosphorylated proteins and promotes their ubiquitination and degradation. In Homo sapiens (Human), this protein is F-box only protein 47.